The following is a 105-amino-acid chain: Pyrimidine/purine nucleoside phosphorylase (105 aa).

Belongs to the nucleoside phosphorylase PpnP family.

The catalysed reaction is a purine D-ribonucleoside + phosphate = a purine nucleobase + alpha-D-ribose 1-phosphate. The enzyme catalyses adenosine + phosphate = alpha-D-ribose 1-phosphate + adenine. It catalyses the reaction cytidine + phosphate = cytosine + alpha-D-ribose 1-phosphate. It carries out the reaction guanosine + phosphate = alpha-D-ribose 1-phosphate + guanine. The catalysed reaction is inosine + phosphate = alpha-D-ribose 1-phosphate + hypoxanthine. The enzyme catalyses thymidine + phosphate = 2-deoxy-alpha-D-ribose 1-phosphate + thymine. It catalyses the reaction uridine + phosphate = alpha-D-ribose 1-phosphate + uracil. It carries out the reaction xanthosine + phosphate = alpha-D-ribose 1-phosphate + xanthine. Functionally, catalyzes the phosphorolysis of diverse nucleosides, yielding D-ribose 1-phosphate and the respective free bases. Can use uridine, adenosine, guanosine, cytidine, thymidine, inosine and xanthosine as substrates. Also catalyzes the reverse reactions. The chain is Pyrimidine/purine nucleoside phosphorylase from Paracidovorax citrulli (strain AAC00-1) (Acidovorax citrulli).